Consider the following 394-residue polypeptide: Exodeoxyribonuclease 7 large subunit (394 aa).

The protein belongs to the XseA family. As to quaternary structure, heterooligomer composed of large and small subunits.

It localises to the cytoplasm. It catalyses the reaction Exonucleolytic cleavage in either 5'- to 3'- or 3'- to 5'-direction to yield nucleoside 5'-phosphates.. Functionally, bidirectionally degrades single-stranded DNA into large acid-insoluble oligonucleotides, which are then degraded further into small acid-soluble oligonucleotides. The polypeptide is Exodeoxyribonuclease 7 large subunit (Thermotoga petrophila (strain ATCC BAA-488 / DSM 13995 / JCM 10881 / RKU-1)).